Reading from the N-terminus, the 401-residue chain is Phosphoglycerate kinase (401 aa).

Residues 24–26 (DFN), R40, 63–66 (HFGR), R122, and R155 each bind substrate. Residues K206, G297, E328, and 357–360 (GGDS) each bind ATP.

This sequence belongs to the phosphoglycerate kinase family. Monomer.

Its subcellular location is the cytoplasm. It carries out the reaction (2R)-3-phosphoglycerate + ATP = (2R)-3-phospho-glyceroyl phosphate + ADP. Its pathway is carbohydrate degradation; glycolysis; pyruvate from D-glyceraldehyde 3-phosphate: step 2/5. This is Phosphoglycerate kinase from Prochlorococcus marinus (strain NATL2A).